Here is a 408-residue protein sequence, read N- to C-terminus: Phosphoglycerate kinase (408 aa).

Residues 28–30, arginine 43, 66–69, arginine 123, and arginine 163 each bind substrate; these read DIN and HQGR. ATP contacts are provided by residues glutamate 334 and 358–361; that span reads GGHT.

Belongs to the phosphoglycerate kinase family. In terms of assembly, monomer.

The protein resides in the cytoplasm. The catalysed reaction is (2R)-3-phosphoglycerate + ATP = (2R)-3-phospho-glyceroyl phosphate + ADP. The protein operates within carbohydrate degradation; glycolysis; pyruvate from D-glyceraldehyde 3-phosphate: step 2/5. This is Phosphoglycerate kinase from Pyrobaculum aerophilum (strain ATCC 51768 / DSM 7523 / JCM 9630 / CIP 104966 / NBRC 100827 / IM2).